The following is a 314-amino-acid chain: Protein YIF1B (314 aa).

Met-1 is subject to N-acetylmethionine. The segment covering 1 to 12 (MHPAGLAAAAAG) has biased composition (low complexity). Residues 1 to 55 (MHPAGLAAAAAGTPRLRKWPSKRRIPVSQPGMADPHQLFDDTSSAQSRGYGAQRA) form a disordered region. Residues 1–156 (MHPAGLAAAA…APRFDVNAPD (156 aa)) are Cytoplasmic-facing. Thr-13 carries the phosphothreonine modification. Residues 15-25 (RLRKWPSKRRI) show a composition bias toward basic residues. Ser-65 bears the Phosphoserine mark. A helical transmembrane segment spans residues 157–177 (LYIPAMAFITYVLVAGLALGT). Topologically, residues 178–192 (QDRFSPDLLGLQASS) are extracellular. Residues 193–213 (ALAWLTLEVLAILLSLYLVTV) traverse the membrane as a helical segment. Residues 214–219 (NTDLTT) lie on the Cytoplasmic side of the membrane. The chain crosses the membrane as a helical span at residues 220 to 240 (IDLVAFLGYKYVGMIGGVLMG). A topological domain (extracellular) is located at residue Leu-241. The helical transmembrane segment at 242 to 262 (LFGKIGYYLVLGWCCVAIFVF) threads the bilayer. The Cytoplasmic segment spans residues 263 to 292 (MIRTLRLKILADAAAEGVPVRGARNQLRMY). A helical membrane pass occupies residues 293–313 (LTMAVAAAQPMLMYWLTFHLV). Arg-314 is a topological domain (extracellular).

Belongs to the YIF1 family. Interacts with HTR1A (via C-terminus). Interacts with ABCB9 (via TMD0); this interaction allows (but is not essential) the ER-to-Golgi trafficking and strongly depends on a salt bridge within TMD0.

It is found in the endoplasmic reticulum membrane. Its subcellular location is the golgi apparatus membrane. The protein resides in the endoplasmic reticulum-Golgi intermediate compartment membrane. Functionally, functions in endoplasmic reticulum to Golgi vesicle-mediated transport and regulates the proper organization of the endoplasmic reticulum and the Golgi. Plays a key role in targeting to neuronal dendrites receptors such as HTR1A. Plays also a role in primary cilium and sperm flagellum assembly probably through protein transport to these compartments. This chain is Protein YIF1B, found in Homo sapiens (Human).